The following is a 417-amino-acid chain: NADH-quinone oxidoreductase subunit D (417 aa).

This sequence belongs to the complex I 49 kDa subunit family. In terms of assembly, NDH-1 is composed of 14 different subunits. Subunits NuoB, C, D, E, F, and G constitute the peripheral sector of the complex.

Its subcellular location is the cell inner membrane. The enzyme catalyses a quinone + NADH + 5 H(+)(in) = a quinol + NAD(+) + 4 H(+)(out). In terms of biological role, NDH-1 shuttles electrons from NADH, via FMN and iron-sulfur (Fe-S) centers, to quinones in the respiratory chain. The immediate electron acceptor for the enzyme in this species is believed to be ubiquinone. Couples the redox reaction to proton translocation (for every two electrons transferred, four hydrogen ions are translocated across the cytoplasmic membrane), and thus conserves the redox energy in a proton gradient. This chain is NADH-quinone oxidoreductase subunit D, found in Acidovorax sp. (strain JS42).